The chain runs to 260 residues: Proteasome subunit alpha (260 aa).

The protein belongs to the peptidase T1A family. As to quaternary structure, the 20S proteasome core is composed of 14 alpha and 14 beta subunits that assemble into four stacked heptameric rings, resulting in a barrel-shaped structure. The two inner rings, each composed of seven catalytic beta subunits, are sandwiched by two outer rings, each composed of seven alpha subunits. The catalytic chamber with the active sites is on the inside of the barrel. Has a gated structure, the ends of the cylinder being occluded by the N-termini of the alpha-subunits. Is capped at one or both ends by the proteasome regulatory ATPase, PAN.

Its subcellular location is the cytoplasm. Its activity is regulated as follows. The formation of the proteasomal ATPase PAN-20S proteasome complex, via the docking of the C-termini of PAN into the intersubunit pockets in the alpha-rings, triggers opening of the gate for substrate entry. Interconversion between the open-gate and close-gate conformations leads to a dynamic regulation of the 20S proteasome proteolysis activity. Functionally, component of the proteasome core, a large protease complex with broad specificity involved in protein degradation. The sequence is that of Proteasome subunit alpha from Thermococcus sp. (strain JCM 11816 / KS-1).